The following is a 456-amino-acid chain: GTPase Der (456 aa).

2 EngA-type G domains span residues 3–167 and 185–360; these read FTIA…PETE and IRVA…AVWN. GTP is bound by residues 9-16, 56-60, 119-122, 191-198, 238-242, and 303-306; these read GRPNVGKS, DTAGL, NKSE, GRPNAGKS, and NKWD. The KH-like domain occupies 361 to 445; that stretch reads RRVPTAALNR…PVRITLREKA (85 aa).

Belongs to the TRAFAC class TrmE-Era-EngA-EngB-Septin-like GTPase superfamily. EngA (Der) GTPase family. As to quaternary structure, associates with the 50S ribosomal subunit.

In terms of biological role, GTPase that plays an essential role in the late steps of ribosome biogenesis. The polypeptide is GTPase Der (Bradyrhizobium sp. (strain BTAi1 / ATCC BAA-1182)).